The chain runs to 235 residues: Riboflavin kinase (235 aa).

The Mg(2+) site is built by Thr-45 and Asn-47. Glu-140 acts as the Nucleophile in catalysis.

This sequence belongs to the flavokinase family. Zn(2+) serves as cofactor. Mg(2+) is required as a cofactor.

It catalyses the reaction riboflavin + ATP = FMN + ADP + H(+). It functions in the pathway cofactor biosynthesis; FMN biosynthesis; FMN from riboflavin (ATP route): step 1/1. Functionally, catalyzes the phosphorylation of riboflavin (vitamin B2) to form flavin mononucleotide (FMN) coenzyme. This chain is Riboflavin kinase (FMN1), found in Chaetomium globosum (strain ATCC 6205 / CBS 148.51 / DSM 1962 / NBRC 6347 / NRRL 1970) (Soil fungus).